The chain runs to 50 residues: Conotoxin Bu13 (50 aa).

A signal peptide is located at residue A1. Positions 2 to 24 (EDSRGTQLHRALRKTTKLSLSIR) are excised as a propeptide. Intrachain disulfides connect C25-C40, C32-C44, and C39-C49.

The protein belongs to the conotoxin O1 superfamily. As to expression, expressed by the venom duct.

It localises to the secreted. This Conus bullatus (Bubble cone) protein is Conotoxin Bu13.